We begin with the raw amino-acid sequence, 90 residues long: Small ribosomal subunit protein uS19 (90 aa).

This sequence belongs to the universal ribosomal protein uS19 family.

In terms of biological role, protein S19 forms a complex with S13 that binds strongly to the 16S ribosomal RNA. This Methylococcus capsulatus (strain ATCC 33009 / NCIMB 11132 / Bath) protein is Small ribosomal subunit protein uS19.